The primary structure comprises 267 residues: Hydroxyacylglutathione hydrolase (267 aa).

His-55, His-57, Asp-59, His-60, His-121, Asp-138, and His-176 together coordinate Zn(2+).

Belongs to the metallo-beta-lactamase superfamily. Glyoxalase II family. Monomer. It depends on Zn(2+) as a cofactor.

It carries out the reaction an S-(2-hydroxyacyl)glutathione + H2O = a 2-hydroxy carboxylate + glutathione + H(+). Its pathway is secondary metabolite metabolism; methylglyoxal degradation; (R)-lactate from methylglyoxal: step 2/2. In terms of biological role, thiolesterase that catalyzes the hydrolysis of S-D-lactoyl-glutathione to form glutathione and D-lactic acid. This Shewanella oneidensis (strain ATCC 700550 / JCM 31522 / CIP 106686 / LMG 19005 / NCIMB 14063 / MR-1) protein is Hydroxyacylglutathione hydrolase.